A 150-amino-acid polypeptide reads, in one-letter code: Large ribosomal subunit protein bL9 (150 aa).

It belongs to the bacterial ribosomal protein bL9 family.

Functionally, binds to the 23S rRNA. The sequence is that of Large ribosomal subunit protein bL9 from Methylibium petroleiphilum (strain ATCC BAA-1232 / LMG 22953 / PM1).